A 1626-amino-acid chain; its full sequence is DNA topoisomerase 2-beta (1626 aa).

The residue at position 2 (Ala-2) is an N-acetylalanine. Lys-3 carries the post-translational modification N6-acetyllysine. Residues Gln-28, Asn-29, Lys-33, and Lys-34 each participate in a glycyl lysine isopeptide (Lys-Gly) (interchain with G-Cter in SUMO2) cross-link. Residues Asn-112, Asn-141, and 169 to 171 (SSN) contribute to the ATP site. Glycyl lysine isopeptide (Lys-Gly) (interchain with G-Cter in SUMO2) cross-links involve residues Lys-177 and Lys-178. Residue 182 to 189 (GRNGYGAK) participates in ATP binding. Residues Lys-228 and Lys-299 each participate in a glycyl lysine isopeptide (Lys-Gly) (interchain with G-Cter in SUMO2) cross-link. Residues 363–365 (KKK) form an interaction with DNA region. Residues Lys-367 and Lys-373 each participate in a glycyl lysine isopeptide (Lys-Gly) (interchain with G-Cter in SUMO2) cross-link. 397 to 399 (QTK) provides a ligand contact to ATP. Glycyl lysine isopeptide (Lys-Gly) (interchain with G-Cter in SUMO2) cross-links involve residues Lys-437, Lys-439, and Lys-446. The region spanning 476-593 (CTLILTEGDS…SLLKHGFLEE (118 aa)) is the Toprim domain. Positions 482, 562, and 564 each coordinate Mg(2+). Glycyl lysine isopeptide (Lys-Gly) (interchain with G-Cter in SUMO2) cross-links involve residues Lys-600, Lys-605, Lys-635, Lys-643, Lys-646, Lys-676, and Lys-712. Residues 736–1189 (IPSLVDGFKP…SPSDLWKEDL (454 aa)) enclose the Topo IIA-type catalytic domain. Tyr-826 serves as the catalytic O-(5'-phospho-DNA)-tyrosine intermediate. Residues 1011 to 1020 (KLQTTLTCNS) form an interaction with DNA region. Positions 1034-1044 (ETVQDILKEFF) match the Nuclear export signal motif. Residue Lys-1092 forms a Glycyl lysine isopeptide (Lys-Gly) (interchain with G-Cter in SUMO2) linkage. The segment at 1110–1140 (AWKEAQEKAAEEDETQNQHDDSSSDSGTPSG) is disordered. Residues Lys-1214, Lys-1217, Lys-1226, and Lys-1227 each participate in a glycyl lysine isopeptide (Lys-Gly) (interchain with G-Cter in SUMO2) cross-link. At Ser-1236 the chain carries Phosphoserine. Residues Lys-1250, Lys-1262, and Lys-1271 each participate in a glycyl lysine isopeptide (Lys-Gly) (interchain with G-Cter in SUMO2) cross-link. The disordered stretch occupies residues 1274 to 1604 (FDEEFSGAPV…PSLPRTGRAR (331 aa)). Thr-1292 carries the phosphothreonine modification. Residues Lys-1323 and Lys-1327 each participate in a glycyl lysine isopeptide (Lys-Gly) (interchain with G-Cter in SUMO2) cross-link. Basic and acidic residues-rich tracts occupy residues 1334 to 1344 (PWSDDESKSES) and 1358 to 1370 (SLLRRAAAERPKY). Residues Ser-1336, Ser-1340, Ser-1342, Ser-1344, and Ser-1358 each carry the phosphoserine modification. At Tyr-1370 the chain carries Phosphotyrosine. Over residues 1374 to 1392 (FSEEEDDDADDDDDDNNDL) the composition is skewed to acidic residues. Position 1375 is a phosphoserine (Ser-1375). A Glycyl lysine isopeptide (Lys-Gly) (interchain with G-Cter in SUMO2) cross-link involves residue Lys-1398. Phosphoserine is present on Ser-1400. Residue Thr-1403 is modified to Phosphothreonine. Phosphoserine is present on Ser-1413. Phosphotyrosine is present on Tyr-1421. The residue at position 1424 (Ser-1424) is a Phosphoserine. Over residues 1430 to 1442 (ATPEKSLHDKKSQ) the composition is skewed to basic and acidic residues. Residue Lys-1440 forms a Glycyl lysine isopeptide (Lys-Gly) (interchain with G-Cter in SUMO2) linkage. Residues Ser-1441, Ser-1452, and Ser-1454 each carry the phosphoserine modification. Lys-1456 participates in a covalent cross-link: Glycyl lysine isopeptide (Lys-Gly) (interchain with G-Cter in SUMO2). Positions 1456–1466 (KSEDDSAKFDS) are enriched in basic and acidic residues. Ser-1461, Ser-1466, Ser-1473, and Ser-1476 each carry phosphoserine. Lys-1490 participates in a covalent cross-link: Glycyl lysine isopeptide (Lys-Gly) (interchain with G-Cter in SUMO2). Residues 1506–1512 (KPKRAPK) form an interaction with PLSCR1 region. A phosphoserine mark is found at Ser-1522, Ser-1524, and Ser-1526. Basic residues predominate over residues 1539 to 1549 (GKGRGAKKRKA). Residues Ser-1550 and Ser-1552 each carry the phosphoserine modification. A compositionally biased stretch (basic residues) spans 1563–1574 (KTSKTTSKKPKK). Residue Thr-1575 is modified to Phosphothreonine. Phosphoserine is present on residues Ser-1576 and Ser-1581. A Phosphothreonine modification is found at Thr-1592. Phosphoserine is present on Ser-1596. Tyr-1609 carries the post-translational modification Phosphotyrosine. The residue at position 1613 (Ser-1613) is a Phosphoserine.

This sequence belongs to the type II topoisomerase family. In terms of assembly, homodimer. Interacts with KIAA1210. Interacts with PLSCR1. Mg(2+) is required as a cofactor. It depends on Mn(2+) as a cofactor. The cofactor is Ca(2+). In terms of processing, (Microbial infection) Deubiquitinated by Epstein-Barr virus BPLF1; leading to stabilized SUMOylated TOP2A trapped in cleavage complexes, which halts the DNA damage response to TOP2A-induced double-strand DNA breaks. Post-translationally, SUMOylated. In terms of tissue distribution, expressed in the tonsil, spleen, lymph node, thymus, skin, pancreas, testis, colon, kidney, liver, brain and lung. Also found in breast, colon and lung carcinomas, Hodgkin's disease, large-cell non-Hodgkin's lymphoma, lymphocytic lymphomas and seminomas.

It localises to the nucleus. It is found in the nucleolus. The protein localises to the nucleoplasm. It catalyses the reaction ATP-dependent breakage, passage and rejoining of double-stranded DNA.. In terms of biological role, key decatenating enzyme that alters DNA topology by binding to two double-stranded DNA molecules, generating a double-stranded break in one of the strands, passing the intact strand through the broken strand, and religating the broken strand. Plays a role in B-cell differentiation. This chain is DNA topoisomerase 2-beta (TOP2B), found in Homo sapiens (Human).